A 276-amino-acid chain; its full sequence is AT-hook motif nuclear-localized protein 17 (276 aa).

Basic and acidic residues predominate over residues 1–10; the sequence is MKGEYREQKS. Disordered regions lie at residues 1–80 and 212–248; these read MKGE…RDTD and AEEE…SGGE. 2 stretches are compositionally biased toward low complexity: residues 20–31 and 40–49; these read HQQQQQQQQQQH and SSTVTPTVDD. Residues 56–68 constitute a DNA-binding region (a.T hook); sequence RRPRGRPPGSKNK. In terms of domain architecture, PPC spans 80 to 230; that stretch reads DPPMSPYILE…GTGEREGQSP (151 aa). Over residues 212 to 227 the composition is skewed to basic and acidic residues; sequence AEEEQKHSAGTGEREG. A compositionally biased stretch (gly residues) spans 233–248; it reads SGGGEESGQMAGSGGE.

The protein resides in the nucleus. Transcription factor that specifically binds AT-rich DNA sequences related to the nuclear matrix attachment regions (MARs). This is AT-hook motif nuclear-localized protein 17 from Arabidopsis thaliana (Mouse-ear cress).